Here is a 128-residue protein sequence, read N- to C-terminus: Secreted RxLR effector protein RXLR-C09 (128 aa).

An N-terminal signal peptide occupies residues 1-22 (MRFCLVFIRLAAFVILSGGATS). The RxLR-dEER signature appears at 58-75 (RLLRLNDQADISGHDEER).

It belongs to the RxLR effector family.

The protein localises to the secreted. It localises to the host cell membrane. The protein resides in the host nucleus. Functionally, secreted effector that suppresses pattern-triggered immunity (PTI) in plant host. In Plasmopara halstedii (Downy mildew of sunflower), this protein is Secreted RxLR effector protein RXLR-C09.